The following is a 294-amino-acid chain: Phosphatidylserine decarboxylase proenzyme (294 aa).

Active-site charge relay system; for autoendoproteolytic cleavage activity residues include Asp-100, His-157, and Ser-261. Ser-261 (schiff-base intermediate with substrate; via pyruvic acid; for decarboxylase activity) is an active-site residue. Ser-261 carries the pyruvic acid (Ser); by autocatalysis modification.

Belongs to the phosphatidylserine decarboxylase family. PSD-B subfamily. Prokaryotic type I sub-subfamily. As to quaternary structure, heterodimer of a large membrane-associated beta subunit and a small pyruvoyl-containing alpha subunit. Pyruvate is required as a cofactor. In terms of processing, is synthesized initially as an inactive proenzyme. Formation of the active enzyme involves a self-maturation process in which the active site pyruvoyl group is generated from an internal serine residue via an autocatalytic post-translational modification. Two non-identical subunits are generated from the proenzyme in this reaction, and the pyruvate is formed at the N-terminus of the alpha chain, which is derived from the carboxyl end of the proenzyme. The autoendoproteolytic cleavage occurs by a canonical serine protease mechanism, in which the side chain hydroxyl group of the serine supplies its oxygen atom to form the C-terminus of the beta chain, while the remainder of the serine residue undergoes an oxidative deamination to produce ammonia and the pyruvoyl prosthetic group on the alpha chain. During this reaction, the Ser that is part of the protease active site of the proenzyme becomes the pyruvoyl prosthetic group, which constitutes an essential element of the active site of the mature decarboxylase.

The protein resides in the cell membrane. The catalysed reaction is a 1,2-diacyl-sn-glycero-3-phospho-L-serine + H(+) = a 1,2-diacyl-sn-glycero-3-phosphoethanolamine + CO2. Its pathway is phospholipid metabolism; phosphatidylethanolamine biosynthesis; phosphatidylethanolamine from CDP-diacylglycerol: step 2/2. Catalyzes the formation of phosphatidylethanolamine (PtdEtn) from phosphatidylserine (PtdSer). This chain is Phosphatidylserine decarboxylase proenzyme, found in Histophilus somni (strain 129Pt) (Haemophilus somnus).